Reading from the N-terminus, the 277-residue chain is MKLKFTKMHGLGNDFIVIDAVNQQISLSPEQLRRLADRHLGVGCDQILLIEKAEGDADFRYRIFNADGGEVEQCGNGARCFVRYVHDHGMTDKQQVRIETLSGVVIPELEADGEVTVNMGVPKFDPVEIPFIAEQRAPTYSLSLDDRQVEISSVSMGNPHAVQVVSDLDNAPVLTEGPVIEKHSRFPQRVNAGYMQVVDPHHIRLRVYERGAGETLACGTGACAAAVAGIQRGLLESPVRVSFSTGDLFIRWEGENQPVWMTGPAVAVFDGEIELQF.

Positions 13, 46, and 65 each coordinate substrate. Residue cysteine 74 is the Proton donor of the active site. Residues 75 to 76 (GN), asparagine 158, asparagine 191, and 209 to 210 (ER) each bind substrate. Cysteine 218 serves as the catalytic Proton acceptor. Residue 219-220 (GT) coordinates substrate.

This sequence belongs to the diaminopimelate epimerase family. As to quaternary structure, homodimer.

Its subcellular location is the cytoplasm. The enzyme catalyses (2S,6S)-2,6-diaminopimelate = meso-2,6-diaminopimelate. It participates in amino-acid biosynthesis; L-lysine biosynthesis via DAP pathway; DL-2,6-diaminopimelate from LL-2,6-diaminopimelate: step 1/1. Its function is as follows. Catalyzes the stereoinversion of LL-2,6-diaminopimelate (L,L-DAP) to meso-diaminopimelate (meso-DAP), a precursor of L-lysine and an essential component of the bacterial peptidoglycan. The chain is Diaminopimelate epimerase from Nitrosospira multiformis (strain ATCC 25196 / NCIMB 11849 / C 71).